Consider the following 149-residue polypeptide: 3-dehydroquinate dehydratase (149 aa).

Tyr-25 acts as the Proton acceptor in catalysis. Residues Asn-76, His-82, and Asp-89 each coordinate substrate. His-102 (proton donor) is an active-site residue. Substrate is bound by residues 103 to 104 (LS) and Arg-113.

Belongs to the type-II 3-dehydroquinase family. Homododecamer.

It catalyses the reaction 3-dehydroquinate = 3-dehydroshikimate + H2O. The protein operates within metabolic intermediate biosynthesis; chorismate biosynthesis; chorismate from D-erythrose 4-phosphate and phosphoenolpyruvate: step 3/7. In terms of biological role, catalyzes a trans-dehydration via an enolate intermediate. The sequence is that of 3-dehydroquinate dehydratase from Acaryochloris marina (strain MBIC 11017).